Here is a 392-residue protein sequence, read N- to C-terminus: S-adenosylmethionine synthase (392 aa).

H20 is an ATP binding site. D22 serves as a coordination point for Mg(2+). Residue E48 coordinates K(+). L-methionine-binding residues include E61 and Q106. The interval 106–116 (QSQDIINAIKK) is flexible loop. ATP-binding positions include 171–173 (DSK), D248, 254–255 (RK), A271, and K275. D248 lines the L-methionine pocket. K279 contacts L-methionine.

This sequence belongs to the AdoMet synthase family. In terms of assembly, homotetramer; dimer of dimers. Mg(2+) serves as cofactor. It depends on K(+) as a cofactor.

The protein localises to the cytoplasm. The enzyme catalyses L-methionine + ATP + H2O = S-adenosyl-L-methionine + phosphate + diphosphate. It functions in the pathway amino-acid biosynthesis; S-adenosyl-L-methionine biosynthesis; S-adenosyl-L-methionine from L-methionine: step 1/1. Its function is as follows. Catalyzes the formation of S-adenosylmethionine (AdoMet) from methionine and ATP. The overall synthetic reaction is composed of two sequential steps, AdoMet formation and the subsequent tripolyphosphate hydrolysis which occurs prior to release of AdoMet from the enzyme. In Borrelia garinii subsp. bavariensis (strain ATCC BAA-2496 / DSM 23469 / PBi) (Borreliella bavariensis), this protein is S-adenosylmethionine synthase.